The sequence spans 310 residues: tRNA dimethylallyltransferase (310 aa).

Residue 10 to 17 (GPTAVGKS) participates in ATP binding. 12–17 (TAVGKS) serves as a coordination point for substrate. The segment at 35–38 (DSMQ) is interaction with substrate tRNA.

It belongs to the IPP transferase family. Monomer. Mg(2+) serves as cofactor.

It carries out the reaction adenosine(37) in tRNA + dimethylallyl diphosphate = N(6)-dimethylallyladenosine(37) in tRNA + diphosphate. Functionally, catalyzes the transfer of a dimethylallyl group onto the adenine at position 37 in tRNAs that read codons beginning with uridine, leading to the formation of N6-(dimethylallyl)adenosine (i(6)A). In Clostridium perfringens (strain 13 / Type A), this protein is tRNA dimethylallyltransferase.